A 100-amino-acid chain; its full sequence is Histone H3-like 2 (100 aa).

The segment at Met1 to Gly46 is disordered.

The protein belongs to the histone H3 family. The nucleosome is a histone octamer containing two molecules each of H2A, H2B, H3 and H4 assembled in one H3-H4 heterotetramer and two H2A-H2B heterodimers. The octamer wraps approximately 147 bp of DNA. Pollen specific.

It is found in the nucleus. The protein localises to the chromosome. Its function is as follows. Core component of nucleosome. Nucleosomes wrap and compact DNA into chromatin, limiting DNA accessibility to the cellular machineries which require DNA as a template. Histones thereby play a central role in transcription regulation, DNA repair, DNA replication and chromosomal stability. DNA accessibility is regulated via a complex set of post-translational modifications of histones, also called histone code, and nucleosome remodeling. In Lilium longiflorum (Trumpet lily), this protein is Histone H3-like 2 (gcH3).